The primary structure comprises 157 residues: 3-dehydroquinate dehydratase (157 aa).

The Proton acceptor role is filled by Tyr-24. The substrate site is built by Asn-75, His-81, and Asp-88. His-101 functions as the Proton donor in the catalytic mechanism. Substrate-binding positions include 102–103 (LS) and Arg-112.

It belongs to the type-II 3-dehydroquinase family. As to quaternary structure, homododecamer.

It catalyses the reaction 3-dehydroquinate = 3-dehydroshikimate + H2O. It participates in metabolic intermediate biosynthesis; chorismate biosynthesis; chorismate from D-erythrose 4-phosphate and phosphoenolpyruvate: step 3/7. Functionally, catalyzes a trans-dehydration via an enolate intermediate. The sequence is that of 3-dehydroquinate dehydratase from Brucella canis (strain ATCC 23365 / NCTC 10854 / RM-666).